Reading from the N-terminus, the 261-residue chain is Cytochrome c oxidase subunit 3 (261 aa).

Residues 1–15 (MTKQMHAFHMVNPSP) are Mitochondrial matrix-facing. Residues 16–34 (WPLTGAASAFMLTSGLAMW) traverse the membrane as a helical segment. Residues 35–40 (FHKHSN) lie on the Mitochondrial intermembrane side of the membrane. A helical membrane pass occupies residues 41-66 (TLIFLSMILMLLTMYQWWRDITREGT). Residues 67-72 (FQGHHT) are Mitochondrial matrix-facing. A helical transmembrane segment spans residues 73 to 105 (SLVQKSLRYGMILFIVSEVCFFFGFFWTFYHSS). The Mitochondrial intermembrane segment spans residues 106–128 (LSPSPDLGMMWPPKGVIPLDPFE). Residues 129-152 (IPLLNTAILLGSGVSVTWAHHSLM) form a helical membrane-spanning segment. The Mitochondrial matrix portion of the chain corresponds to 153–155 (EKT). A helical transmembrane segment spans residues 156 to 183 (HKDMVISLSITIILGIYFTLLQGMEYFN). Topologically, residues 184–190 (STFNISD) are mitochondrial intermembrane. The chain crosses the membrane as a helical span at residues 191 to 223 (NAYGSTFFVATGFHGGHVIIGTLFLTVCLLRQL). Residues 224 to 232 (MFHFTSSHH) are Mitochondrial matrix-facing. Residues 233–256 (FGFEAAAWYWHFVDVVWLFLFISI) form a helical membrane-spanning segment. Topologically, residues 257 to 261 (YWWGS) are mitochondrial intermembrane.

The protein belongs to the cytochrome c oxidase subunit 3 family. In terms of assembly, component of the cytochrome c oxidase (complex IV, CIV), a multisubunit enzyme composed of 14 subunits. The complex is composed of a catalytic core of 3 subunits MT-CO1, MT-CO2 and MT-CO3, encoded in the mitochondrial DNA, and 11 supernumerary subunits COX4I, COX5A, COX5B, COX6A, COX6B, COX6C, COX7A, COX7B, COX7C, COX8 and NDUFA4, which are encoded in the nuclear genome. The complex exists as a monomer or a dimer and forms supercomplexes (SCs) in the inner mitochondrial membrane with NADH-ubiquinone oxidoreductase (complex I, CI) and ubiquinol-cytochrome c oxidoreductase (cytochrome b-c1 complex, complex III, CIII), resulting in different assemblies (supercomplex SCI(1)III(2)IV(1) and megacomplex MCI(2)III(2)IV(2)).

The protein localises to the mitochondrion inner membrane. It carries out the reaction 4 Fe(II)-[cytochrome c] + O2 + 8 H(+)(in) = 4 Fe(III)-[cytochrome c] + 2 H2O + 4 H(+)(out). Its function is as follows. Component of the cytochrome c oxidase, the last enzyme in the mitochondrial electron transport chain which drives oxidative phosphorylation. The respiratory chain contains 3 multisubunit complexes succinate dehydrogenase (complex II, CII), ubiquinol-cytochrome c oxidoreductase (cytochrome b-c1 complex, complex III, CIII) and cytochrome c oxidase (complex IV, CIV), that cooperate to transfer electrons derived from NADH and succinate to molecular oxygen, creating an electrochemical gradient over the inner membrane that drives transmembrane transport and the ATP synthase. Cytochrome c oxidase is the component of the respiratory chain that catalyzes the reduction of oxygen to water. Electrons originating from reduced cytochrome c in the intermembrane space (IMS) are transferred via the dinuclear copper A center (CU(A)) of subunit 2 and heme A of subunit 1 to the active site in subunit 1, a binuclear center (BNC) formed by heme A3 and copper B (CU(B)). The BNC reduces molecular oxygen to 2 water molecules using 4 electrons from cytochrome c in the IMS and 4 protons from the mitochondrial matrix. The chain is Cytochrome c oxidase subunit 3 (MT-CO3) from Myxine glutinosa (Atlantic hagfish).